The primary structure comprises 129 residues: Follitropin subunit beta (129 aa).

The signal sequence occupies residues methionine 1 to serine 20. 6 disulfide bridges follow: cysteine 21/cysteine 69, cysteine 35/cysteine 84, cysteine 38/cysteine 122, cysteine 46/cysteine 100, cysteine 50/cysteine 102, and cysteine 105/cysteine 112. Residues asparagine 25 and asparagine 42 are each glycosylated (N-linked (GlcNAc...) asparagine).

This sequence belongs to the glycoprotein hormones subunit beta family. Heterodimer. The active follitropin is a heterodimer composed of an alpha chain/CGA shared with other hormones and a unique beta chain/FSHB shown here.

It localises to the secreted. In terms of biological role, together with the alpha chain CGA constitutes follitropin, the follicle-stimulating hormone, and provides its biological specificity to the hormone heterodimer. Binds FSHR, a G protein-coupled receptor, on target cells to activate downstream signaling pathways. Follitropin is involved in follicle development and spermatogenesis in reproductive organs. The polypeptide is Follitropin subunit beta (FSHB) (Gorilla gorilla gorilla (Western lowland gorilla)).